The following is a 396-amino-acid chain: MSQLKLNPYFGEYGGMYVPQILVPALKQLENAFVEAQADESFQAEFTDLLKNYAGRPTALTLTRNLSPNPMVKIYLKREDLLHGGAHKTNQVLGQALLAKRMGKKEIIAETGAGQHGVATALACALLGLKCKVYMGAKDVARQSPNVFRMRLMGAEVIPVTSGSATLKDACNEAMRDWSGSYEKAHYLLGTAAGPHPFPTIVREFQRMIGEETKKQMLEREGRLPDAVIACVGGGSNAIGMFADFIDETSVELIGVEPAGKGIDTHMHGAPLKHGKTGIFFGMKAPLMQDSEGQIEESYSISAGLDFPSVGPQHAHLNAIGRARYESATDDEALEAFQLLARSEGIIPALESAHALAYALRLAKECTKETILVVNLSGRGDKDIFTVSDILNGKEE.

K88 is modified (N6-(pyridoxal phosphate)lysine).

This sequence belongs to the TrpB family. Tetramer of two alpha and two beta chains. Pyridoxal 5'-phosphate serves as cofactor.

The catalysed reaction is (1S,2R)-1-C-(indol-3-yl)glycerol 3-phosphate + L-serine = D-glyceraldehyde 3-phosphate + L-tryptophan + H2O. The protein operates within amino-acid biosynthesis; L-tryptophan biosynthesis; L-tryptophan from chorismate: step 5/5. Its function is as follows. The beta subunit is responsible for the synthesis of L-tryptophan from indole and L-serine. This chain is Tryptophan synthase beta chain, found in Shewanella sp. (strain ANA-3).